A 22-amino-acid polypeptide reads, in one-letter code: Peroxidase 5 (22 aa).

Belongs to the peroxidase family. Classical plant (class III) peroxidase subfamily. Heme b serves as cofactor. Requires Ca(2+) as cofactor.

It is found in the secreted. It localises to the cell wall. It catalyses the reaction 2 a phenolic donor + H2O2 = 2 a phenolic radical donor + 2 H2O. Functionally, removal of H(2)O(2), oxidation of toxic reductants, biosynthesis and degradation of lignin, suberization, auxin catabolism, response to environmental stresses such as wounding, pathogen attack and oxidative stress. These functions might be dependent on each isozyme/isoform in each plant tissue. The chain is Peroxidase 5 from Cycas revoluta (Sago palm).